The following is an 80-amino-acid chain: Exodeoxyribonuclease 7 small subunit (80 aa).

The protein belongs to the XseB family. Heterooligomer composed of large and small subunits.

Its subcellular location is the cytoplasm. The enzyme catalyses Exonucleolytic cleavage in either 5'- to 3'- or 3'- to 5'-direction to yield nucleoside 5'-phosphates.. Its function is as follows. Bidirectionally degrades single-stranded DNA into large acid-insoluble oligonucleotides, which are then degraded further into small acid-soluble oligonucleotides. This is Exodeoxyribonuclease 7 small subunit from Pseudomonas entomophila (strain L48).